The chain runs to 491 residues: Ketol-acid reductoisomerase (NADP(+)) (491 aa).

The region spanning 15-208 is the KARI N-terminal Rossmann domain; sequence AQLGKCRFMG…GGHRAGVLES (194 aa). NADP(+)-binding positions include 45–48, arginine 68, arginine 76, serine 78, and 108–110; these read CGAQ and DKQ. Histidine 132 is an active-site residue. Glycine 158 is an NADP(+) binding site. KARI C-terminal knotted domains lie at 209–344 and 345–484; these read SFVA…TAPQ and YEGK…MTDM. Mg(2+) is bound by residues aspartate 217, glutamate 221, glutamate 389, and glutamate 393. Serine 414 provides a ligand contact to substrate.

The protein belongs to the ketol-acid reductoisomerase family. The cofactor is Mg(2+).

The enzyme catalyses (2R)-2,3-dihydroxy-3-methylbutanoate + NADP(+) = (2S)-2-acetolactate + NADPH + H(+). The catalysed reaction is (2R,3R)-2,3-dihydroxy-3-methylpentanoate + NADP(+) = (S)-2-ethyl-2-hydroxy-3-oxobutanoate + NADPH + H(+). It functions in the pathway amino-acid biosynthesis; L-isoleucine biosynthesis; L-isoleucine from 2-oxobutanoate: step 2/4. Its pathway is amino-acid biosynthesis; L-valine biosynthesis; L-valine from pyruvate: step 2/4. In terms of biological role, involved in the biosynthesis of branched-chain amino acids (BCAA). Catalyzes an alkyl-migration followed by a ketol-acid reduction of (S)-2-acetolactate (S2AL) to yield (R)-2,3-dihydroxy-isovalerate. In the isomerase reaction, S2AL is rearranged via a Mg-dependent methyl migration to produce 3-hydroxy-3-methyl-2-ketobutyrate (HMKB). In the reductase reaction, this 2-ketoacid undergoes a metal-dependent reduction by NADPH to yield (R)-2,3-dihydroxy-isovalerate. The polypeptide is Ketol-acid reductoisomerase (NADP(+)) (Salmonella typhimurium (strain LT2 / SGSC1412 / ATCC 700720)).